The following is a 540-amino-acid chain: CTP synthase (540 aa).

The segment at 1 to 267 is amidoligase domain; the sequence is MTKYIFVTGG…DQKVCDFLHL (267 aa). Ser13 contributes to the CTP binding site. Ser13 is a binding site for UTP. Residue 14-19 participates in ATP binding; the sequence is SLGKGI. Tyr54 lines the L-glutamine pocket. Residue Asp71 coordinates ATP. The Mg(2+) site is built by Asp71 and Glu141. CTP is bound by residues 148-150, 188-193, and Lys224; these read DIE and KTKPTQ. Residues 188–193 and Lys224 contribute to the UTP site; that span reads KTKPTQ. The region spanning 294-537 is the Glutamine amidotransferase type-1 domain; it reads TITLVGKYVE…IGAASGLPAQ (244 aa). Gly356 contacts L-glutamine. Cys383 acts as the Nucleophile; for glutamine hydrolysis in catalysis. Residues 384 to 387, Glu407, and Arg465 contribute to the L-glutamine site; that span reads LGMQ. Residues His510 and Glu512 contribute to the active site.

Belongs to the CTP synthase family. As to quaternary structure, homotetramer.

It catalyses the reaction UTP + L-glutamine + ATP + H2O = CTP + L-glutamate + ADP + phosphate + 2 H(+). It carries out the reaction L-glutamine + H2O = L-glutamate + NH4(+). The enzyme catalyses UTP + NH4(+) + ATP = CTP + ADP + phosphate + 2 H(+). It participates in pyrimidine metabolism; CTP biosynthesis via de novo pathway; CTP from UDP: step 2/2. Allosterically activated by GTP, when glutamine is the substrate; GTP has no effect on the reaction when ammonia is the substrate. The allosteric effector GTP functions by stabilizing the protein conformation that binds the tetrahedral intermediate(s) formed during glutamine hydrolysis. Inhibited by the product CTP, via allosteric rather than competitive inhibition. In terms of biological role, catalyzes the ATP-dependent amination of UTP to CTP with either L-glutamine or ammonia as the source of nitrogen. Regulates intracellular CTP levels through interactions with the four ribonucleotide triphosphates. This chain is CTP synthase, found in Lactobacillus johnsonii (strain CNCM I-12250 / La1 / NCC 533).